We begin with the raw amino-acid sequence, 526 residues long: Protein spinster homolog 1 (526 aa).

Residues 1–44 (MTSRRSHGDVTPFLTQADNTEEEGVRDPESQSSDEEEEEGKDHG) form a disordered region. The next 12 membrane-spanning stretches (helical) occupy residues 59 to 79 (VIIV…RFTV), 98 to 118 (GLVQ…FGYL), 126 to 146 (LIMC…SFVS), 159 to 179 (LVGV…ADLF), 187 to 207 (MLSF…IVGS), 218 to 238 (WALR…IFVA), 272 to 292 (FILS…LALW), 321 to 341 (MIFG…GVEI), 355 to 375 (LVCA…LAFA), 384 to 404 (VFIF…ADIL), 419 to 439 (LQIV…IGVI), and 463 to 483 (MICA…ALFI).

It belongs to the major facilitator superfamily. Spinster (TC 2.A.1.49) family.

Its subcellular location is the lysosome membrane. It carries out the reaction a 1-acyl-sn-glycero-3-phosphocholine(out) + H(+)(out) = a 1-acyl-sn-glycero-3-phosphocholine(in) + H(+)(in). It catalyses the reaction a 1-acyl-sn-glycero-3-phosphoethanolamine(out) + H(+)(out) = a 1-acyl-sn-glycero-3-phosphoethanolamine(in) + H(+)(in). The enzyme catalyses a 1-O-(1Z-alkenyl)-sn-glycero-3-phosphocholine(out) + H(+)(out) = a 1-O-(1Z-alkenyl)-sn-glycero-3-phosphocholine(in) + H(+)(in). The catalysed reaction is a 1-O-(1Z-alkenyl)-sn-glycero-3-phosphoethanolamine(out) + H(+)(out) = a 1-O-(1Z-alkenyl)-sn-glycero-3-phosphoethanolamine(in) + H(+)(in). Functionally, mediates the rate-limiting, proton-dependent, lysosomal efflux of lysophospholipids. Selective for zwitterionic headgroups such as lysophosphatidylcholine (LPC) and lysophosphatidylethanolamine (LPE). Essential player in lysosomal homeostasis. The polypeptide is Protein spinster homolog 1 (spns1) (Xenopus laevis (African clawed frog)).